A 246-amino-acid chain; its full sequence is tRNA (guanine-N(1)-)-methyltransferase (246 aa).

S-adenosyl-L-methionine contacts are provided by residues G113 and I133–L138.

This sequence belongs to the RNA methyltransferase TrmD family. As to quaternary structure, homodimer.

It is found in the cytoplasm. It catalyses the reaction guanosine(37) in tRNA + S-adenosyl-L-methionine = N(1)-methylguanosine(37) in tRNA + S-adenosyl-L-homocysteine + H(+). Functionally, specifically methylates guanosine-37 in various tRNAs. The sequence is that of tRNA (guanine-N(1)-)-methyltransferase from Haemophilus influenzae (strain PittEE).